Here is a 316-residue protein sequence, read N- to C-terminus: Probable prolyl 4-hydroxylase 7 (316 aa).

At 1–4 (MDSR) the chain is on the cytoplasmic side. The chain crosses the membrane as a helical; Signal-anchor for type II membrane protein span at residues 5–24 (IFLAFSLCFLFTLPLISSAP). At 25-316 (NRFLTRSSNT…CRKSCKACSS (292 aa)) the chain is on the lumenal side. Asn96 carries an N-linked (GlcNAc...) asparagine glycan. Residues 139 to 261 (NGESMQILHY…KWSATRWIHV (123 aa)) enclose the Fe2OG dioxygenase domain. Fe cation is bound by residues His157 and Asp159. Asn233 is a glycosylation site (N-linked (GlcNAc...) asparagine). Fe cation is bound at residue His242. Lys252 provides a ligand contact to 2-oxoglutarate. In terms of domain architecture, ShKT spans 274-314 (CMDENVSCEKWAKAGECQKNPTYMVGSDKDHGYCRKSCKAC). 3 disulfide bridges follow: Cys274/Cys314, Cys281/Cys307, and Cys290/Cys311. Asn278 carries N-linked (GlcNAc...) asparagine glycosylation.

It belongs to the P4HA family. Requires Fe(2+) as cofactor. L-ascorbate serves as cofactor.

It localises to the endoplasmic reticulum membrane. It catalyses the reaction L-prolyl-[collagen] + 2-oxoglutarate + O2 = trans-4-hydroxy-L-prolyl-[collagen] + succinate + CO2. Its function is as follows. Catalyzes the post-translational formation of 4-hydroxyproline in -Xaa-Pro-Gly- sequences in proline-rich peptide sequences of plant glycoproteins and other proteins. Hydroxyprolines are important constituent of many plant cell wall glycoproteins such as extensins, hydroxyproline-rich glycoproteins, lectins and arabinogalactan proteins. The polypeptide is Probable prolyl 4-hydroxylase 7 (Arabidopsis thaliana (Mouse-ear cress)).